Reading from the N-terminus, the 155-residue chain is Cytochrome P450 (155 aa).

Cysteine 99 is a binding site for heme.

The protein belongs to the cytochrome P450 family. Heme serves as cofactor.

The sequence is that of Cytochrome P450 from Helianthus annuus (Common sunflower).